A 255-amino-acid chain; its full sequence is Geranylgeranylglyceryl phosphate synthase (255 aa).

Residues Asp34 and Thr64 each contribute to the Mg(2+) site. Sn-glycerol 1-phosphate-binding positions include 182 to 188, 213 to 214, and 235 to 236; these read YLEAGSG, GG, and GN.

It belongs to the GGGP/HepGP synthase family. Group II subfamily. The cofactor is Mg(2+).

The protein resides in the cytoplasm. The enzyme catalyses sn-glycerol 1-phosphate + (2E,6E,10E)-geranylgeranyl diphosphate = sn-3-O-(geranylgeranyl)glycerol 1-phosphate + diphosphate. The protein operates within membrane lipid metabolism; glycerophospholipid metabolism. Prenyltransferase that catalyzes the transfer of the geranylgeranyl moiety of geranylgeranyl diphosphate (GGPP) to the C3 hydroxyl of sn-glycerol-1-phosphate (G1P). This reaction is the first ether-bond-formation step in the biosynthesis of archaeal membrane lipids. The chain is Geranylgeranylglyceryl phosphate synthase from Saccharolobus solfataricus (strain ATCC 35092 / DSM 1617 / JCM 11322 / P2) (Sulfolobus solfataricus).